Reading from the N-terminus, the 642-residue chain is Threonine--tRNA ligase (642 aa).

Residues 1–61 (MPIITLPDGS…EEDASLEIIT (61 aa)) form the TGS domain. The interval 244-535 (DHRKIGKQLD…LIEEYAGFFP (292 aa)) is catalytic. Positions 335, 386, and 512 each coordinate Zn(2+).

The protein belongs to the class-II aminoacyl-tRNA synthetase family. In terms of assembly, homodimer. It depends on Zn(2+) as a cofactor.

It is found in the cytoplasm. The enzyme catalyses tRNA(Thr) + L-threonine + ATP = L-threonyl-tRNA(Thr) + AMP + diphosphate + H(+). Catalyzes the attachment of threonine to tRNA(Thr) in a two-step reaction: L-threonine is first activated by ATP to form Thr-AMP and then transferred to the acceptor end of tRNA(Thr). Also edits incorrectly charged L-seryl-tRNA(Thr). The protein is Threonine--tRNA ligase of Vibrio vulnificus (strain CMCP6).